A 235-amino-acid chain; its full sequence is MIDSLPAFWAVIPAAGVGARMAADRPKQYLQLGGRTILEHSLGCFLDHPSLKGLVVSLAVDDPYWPNLASASDPRIQRVDGGTERSGSVLNALLHLHAQGADDEDWVLVHDAARPNLSRDDLDKLLAELANDPVGGLLAVPAKDTLKRVDKHGRVVETVDRSVIWQAYTPQMFRLGALHRALADSLVAVAVITDEASAMEWAGMAPRLIEGRADNLKVTRPEDLEWLRQRWTNRR.

This sequence belongs to the IspD/TarI cytidylyltransferase family. IspD subfamily.

The catalysed reaction is 2-C-methyl-D-erythritol 4-phosphate + CTP + H(+) = 4-CDP-2-C-methyl-D-erythritol + diphosphate. The protein operates within isoprenoid biosynthesis; isopentenyl diphosphate biosynthesis via DXP pathway; isopentenyl diphosphate from 1-deoxy-D-xylulose 5-phosphate: step 2/6. In terms of biological role, catalyzes the formation of 4-diphosphocytidyl-2-C-methyl-D-erythritol from CTP and 2-C-methyl-D-erythritol 4-phosphate (MEP). The chain is 2-C-methyl-D-erythritol 4-phosphate cytidylyltransferase from Pseudomonas fluorescens (strain Pf0-1).